A 216-amino-acid chain; its full sequence is Peptide deformylase 1 (216 aa).

Fe cation is bound by residues cysteine 135 and histidine 177. Residue glutamate 178 is part of the active site. Fe cation is bound at residue histidine 181.

It belongs to the polypeptide deformylase family. The cofactor is Fe(2+).

It carries out the reaction N-terminal N-formyl-L-methionyl-[peptide] + H2O = N-terminal L-methionyl-[peptide] + formate. Removes the formyl group from the N-terminal Met of newly synthesized proteins. Requires at least a dipeptide for an efficient rate of reaction. N-terminal L-methionine is a prerequisite for activity but the enzyme has broad specificity at other positions. The sequence is that of Peptide deformylase 1 from Streptomyces avermitilis (strain ATCC 31267 / DSM 46492 / JCM 5070 / NBRC 14893 / NCIMB 12804 / NRRL 8165 / MA-4680).